Consider the following 239-residue polypeptide: Hexuronic acid methyltransferase AglP (239 aa).

This sequence belongs to the FkbM methyltransferase family.

Its subcellular location is the cytoplasm. The protein operates within cell surface structure biogenesis; S-layer biogenesis. Involved in the assembly of a N-linked pentasaccharide that decorates the S-layer glycoprotein and flagellins. S-adenosyl-L-methionine-dependent methyltransferase that modifies the hexuronic acid found at position 4 of the pentasaccharide. This is Hexuronic acid methyltransferase AglP (aglP) from Haloferax volcanii (strain ATCC 29605 / DSM 3757 / JCM 8879 / NBRC 14742 / NCIMB 2012 / VKM B-1768 / DS2) (Halobacterium volcanii).